A 2293-amino-acid chain; its full sequence is Protein Ycf2 (2293 aa).

Residue G1647–S1654 coordinates ATP.

It belongs to the Ycf2 family.

Its subcellular location is the plastid. It localises to the chloroplast stroma. In terms of biological role, probable ATPase of unknown function. Its presence in a non-photosynthetic plant (Epifagus virginiana) and experiments in tobacco indicate that it has an essential function which is probably not related to photosynthesis. This chain is Protein Ycf2, found in Lobularia maritima (Sweet alyssum).